The sequence spans 283 residues: Pantothenate synthetase (283 aa).

30–37 (MGALHEGH) contributes to the ATP binding site. Catalysis depends on histidine 37, which acts as the Proton donor. Glutamine 61 is a binding site for (R)-pantoate. Position 61 (glutamine 61) interacts with beta-alanine. 149 to 152 (GEKD) serves as a coordination point for ATP. Glutamine 155 contributes to the (R)-pantoate binding site. ATP is bound by residues leucine 178 and 186–189 (RSSR).

This sequence belongs to the pantothenate synthetase family. Homodimer.

It localises to the cytoplasm. The enzyme catalyses (R)-pantoate + beta-alanine + ATP = (R)-pantothenate + AMP + diphosphate + H(+). The protein operates within cofactor biosynthesis; (R)-pantothenate biosynthesis; (R)-pantothenate from (R)-pantoate and beta-alanine: step 1/1. Its function is as follows. Catalyzes the condensation of pantoate with beta-alanine in an ATP-dependent reaction via a pantoyl-adenylate intermediate. The polypeptide is Pantothenate synthetase (Christiangramia forsetii (strain DSM 17595 / CGMCC 1.15422 / KT0803) (Gramella forsetii)).